A 149-amino-acid chain; its full sequence is Probable glycine cleavage system H protein 2 (149 aa).

One can recognise a Lipoyl-binding domain in the interval 32 to 114 (IAVVGITDLA…YGQGWIAKIK (83 aa)). The residue at position 73 (K73) is an N6-lipoyllysine.

The protein belongs to the GcvH family. The glycine cleavage system is composed of four proteins: P, T, L and H. (R)-lipoate serves as cofactor.

Its function is as follows. The glycine cleavage system catalyzes the degradation of glycine. The H protein shuttles the methylamine group of glycine from the P protein to the T protein. This is Probable glycine cleavage system H protein 2 from Sulfolobus acidocaldarius (strain ATCC 33909 / DSM 639 / JCM 8929 / NBRC 15157 / NCIMB 11770).